A 946-amino-acid chain; its full sequence is Leucine--tRNA ligase (946 aa).

The 'HIGH' region signature appears at Pro43–His53. The 'KMSKS' region motif lies at Lys638 to Ser642. Lys641 serves as a coordination point for ATP.

It belongs to the class-I aminoacyl-tRNA synthetase family.

It localises to the cytoplasm. The catalysed reaction is tRNA(Leu) + L-leucine + ATP = L-leucyl-tRNA(Leu) + AMP + diphosphate. The protein is Leucine--tRNA ligase of Pyrobaculum calidifontis (strain DSM 21063 / JCM 11548 / VA1).